Reading from the N-terminus, the 865-residue chain is cGMP-specific 3',5'-cyclic phosphodiesterase (865 aa).

Residues 69 to 83 show a composition bias toward low complexity; it reads CSCSSQQSSRADSSA. Residues 69-92 are disordered; the sequence is CSCSSQQSSRADSSAPGTPTRKIS. Ser92 carries the post-translational modification Phosphoserine. 2 GAF domains span residues 154-304 and 336-493; these read DVTA…GIVL and SLEV…GLGI. Residues 526 to 850 enclose the PDEase domain; the sequence is ETKELQSLAA…QKWQALAEQQ (325 aa). Residue His603 is the Proton donor of the active site. Zn(2+) is bound by residues His607, His643, Asp644, and Asp754. Asp644 serves as a coordination point for Mg(2+). Gln807 serves as a coordination point for 3',5'-cyclic GMP.

Belongs to the cyclic nucleotide phosphodiesterase family. Zn(2+) serves as cofactor. Requires Mg(2+) as cofactor. Post-translationally, phosphorylation is regulated by binding of cGMP to the two allosteric sites. Phosphorylation by PRKG1 leads to its activation. As to expression, isoform PDE5A1 and isoform PDE5A2 are highly expressed in the cerebellum, hippocampus, retina, lung, heart, spleen, and thoracic artery. Isoform PDE5A1, but not isoform PDE5A2, is also abundantly expressed in the pylorus.

The protein localises to the cytoplasm. The protein resides in the cytosol. The enzyme catalyses 3',5'-cyclic GMP + H2O = GMP + H(+). It functions in the pathway purine metabolism; 3',5'-cyclic GMP degradation; GMP from 3',5'-cyclic GMP: step 1/1. With respect to regulation, inhibited by zaprinast. Plays a role in signal transduction by regulating the intracellular concentration of cyclic nucleotides. This phosphodiesterase catalyzes the specific hydrolysis of cGMP to 5'-GMP. Specifically regulates nitric-oxide-generated cGMP. This is cGMP-specific 3',5'-cyclic phosphodiesterase (PDE5A) from Canis lupus familiaris (Dog).